The primary structure comprises 408 residues: LL-diaminopimelate aminotransferase (408 aa).

Tyrosine 15 and glycine 42 together coordinate substrate. Pyridoxal 5'-phosphate-binding positions include tyrosine 72, 108-109 (SK), tyrosine 132, asparagine 187, tyrosine 218, and 246-248 (SFS). 3 residues coordinate substrate: lysine 109, tyrosine 132, and asparagine 187. Lysine 249 is modified (N6-(pyridoxal phosphate)lysine). The pyridoxal 5'-phosphate site is built by arginine 257 and asparagine 292. The substrate site is built by asparagine 292 and arginine 388.

This sequence belongs to the class-I pyridoxal-phosphate-dependent aminotransferase family. LL-diaminopimelate aminotransferase subfamily. In terms of assembly, homodimer. It depends on pyridoxal 5'-phosphate as a cofactor.

It catalyses the reaction (2S,6S)-2,6-diaminopimelate + 2-oxoglutarate = (S)-2,3,4,5-tetrahydrodipicolinate + L-glutamate + H2O + H(+). It participates in amino-acid biosynthesis; L-lysine biosynthesis via DAP pathway; LL-2,6-diaminopimelate from (S)-tetrahydrodipicolinate (aminotransferase route): step 1/1. Involved in the synthesis of meso-diaminopimelate (m-DAP or DL-DAP), required for both lysine and peptidoglycan biosynthesis. Catalyzes the direct conversion of tetrahydrodipicolinate to LL-diaminopimelate. This Synechococcus sp. (strain WH7803) protein is LL-diaminopimelate aminotransferase.